Consider the following 202-residue polypeptide: Ribonuclease HII (202 aa).

One can recognise an RNase H type-2 domain in the interval 11 to 200 (GLIAGVDEVG…VRKAIEEFNR (190 aa)). Positions 17, 18, and 109 each coordinate a divalent metal cation.

It belongs to the RNase HII family. The cofactor is Mn(2+). Mg(2+) is required as a cofactor.

Its subcellular location is the cytoplasm. It carries out the reaction Endonucleolytic cleavage to 5'-phosphomonoester.. Its function is as follows. Endonuclease that specifically degrades the RNA of RNA-DNA hybrids. This Actinobacillus succinogenes (strain ATCC 55618 / DSM 22257 / CCUG 43843 / 130Z) protein is Ribonuclease HII.